The sequence spans 267 residues: Dihydropteroate synthase (267 aa).

Residues Met-1–Lys-251 form the Pterin-binding domain. Position 11 (Asn-11) interacts with Mg(2+). (7,8-dihydropterin-6-yl)methyl diphosphate contacts are provided by residues Thr-51, Asp-84, Asn-103, Asp-167, Lys-203, and Arg-239 to His-241.

Belongs to the DHPS family. In terms of assembly, homodimer. It depends on Mg(2+) as a cofactor.

The enzyme catalyses (7,8-dihydropterin-6-yl)methyl diphosphate + 4-aminobenzoate = 7,8-dihydropteroate + diphosphate. It participates in cofactor biosynthesis; tetrahydrofolate biosynthesis; 7,8-dihydrofolate from 2-amino-4-hydroxy-6-hydroxymethyl-7,8-dihydropteridine diphosphate and 4-aminobenzoate: step 1/2. In terms of biological role, catalyzes the condensation of para-aminobenzoate (pABA) with 6-hydroxymethyl-7,8-dihydropterin diphosphate (DHPt-PP) to form 7,8-dihydropteroate (H2Pte), the immediate precursor of folate derivatives. The sequence is that of Dihydropteroate synthase (folP) from Staphylococcus aureus (strain MRSA252).